We begin with the raw amino-acid sequence, 205 residues long: MLMKSRVNLLFKGPFFFRERCFQTLLNPVIAIRQLSHGSLRNSRSCRIDAKSNTLTKEIFPKINNEFKIKNRFYSSKLANDQFTLQEQCDEKGIPFILYVKDSAKKQLEKIAERKPEENSVLRVTVDGGGCHGYQVSFRMDNKIGNADTVFVRGKARVVADNISLPLISGSEIEYTNELIGSSFQLLNNPRAKTSCGCNVSFDVE.

Residues Cys-131, Cys-196, and Cys-198 each coordinate Fe cation.

The protein belongs to the HesB/IscA family.

Its subcellular location is the mitochondrion matrix. In terms of biological role, involved in the assembly of mitochondrial and cytoplasmic iron-sulfur proteins. Probably involved in the binding of an intermediate of Fe/S cluster assembly. The chain is Iron-sulfur assembly protein 2 (isa2) from Schizosaccharomyces pombe (strain 972 / ATCC 24843) (Fission yeast).